A 760-amino-acid chain; its full sequence is MOXD1 homolog 2 (760 aa).

A disordered region spans residues 1-34 (MAHPRKAVATPATLQLGPPAQTAQSPAATLRHSR). The span at 18–34 (PPAQTAQSPAATLRHSR) shows a compositional bias: low complexity. The helical transmembrane segment at 47–67 (CFISCHTFNLFLLLLLLASGV) threads the bilayer. Residues N78, N198, and N223 are each glycosylated (N-linked (GlcNAc...) asparagine). The DOMON domain occupies 117 to 233 (DDFRILWQII…DTMRLLYMYH (117 aa)). Intrachain disulfides connect C339–C367, C467–C581, and C543–C565. N668 carries an N-linked (GlcNAc...) asparagine glycan. The interval 678 to 701 (RCKPKRPLAPPTERTAPPPASDLS) is disordered. The helical transmembrane segment at 740–760 (FISCLLWLGASSWWLLLMLRT) threads the bilayer.

This sequence belongs to the copper type II ascorbate-dependent monooxygenase family.

The protein localises to the membrane. The chain is MOXD1 homolog 2 (olf413) from Drosophila melanogaster (Fruit fly).